The chain runs to 360 residues: Archaemetzincin-2 (360 aa).

Histidine 254 provides a ligand contact to Zn(2+). Catalysis depends on glutamate 255, which acts as the Proton acceptor. Zn(2+) contacts are provided by histidine 258, histidine 264, cysteine 265, cysteine 270, cysteine 289, and cysteine 292.

The protein belongs to the peptidase M54 family. Zn(2+) serves as cofactor.

In terms of biological role, probable zinc metalloprotease. The sequence is that of Archaemetzincin-2 (AMZ2) from Macaca fascicularis (Crab-eating macaque).